We begin with the raw amino-acid sequence, 275 residues long: Fructose-2,6-bisphosphatase TIGAR (275 aa).

The active-site Tele-phosphohistidine intermediate is H11. E89 acts as the Proton donor/acceptor in catalysis.

The protein belongs to the phosphoglycerate mutase family.

It is found in the cytoplasm. It localises to the nucleus. Its subcellular location is the mitochondrion. The catalysed reaction is beta-D-fructose 2,6-bisphosphate + H2O = beta-D-fructose 6-phosphate + phosphate. Its function is as follows. Fructose-bisphosphatase hydrolyzing fructose-2,6-bisphosphate as well as fructose-1,6-bisphosphate. Acts as a negative regulator of glycolysis by lowering intracellular levels of fructose-2,6-bisphosphate in a p53/TP53-dependent manner, resulting in the pentose phosphate pathway (PPP) activation and NADPH production. Contributes to the generation of reduced glutathione to cause a decrease in intracellular reactive oxygen species (ROS) content, correlating with its ability to protect cells from oxidative or metabolic stress-induced cell death. May play a role in mitophagy inhibition. In Xenopus tropicalis (Western clawed frog), this protein is Fructose-2,6-bisphosphatase TIGAR.